The chain runs to 715 residues: Polyribonucleotide nucleotidyltransferase (715 aa).

Mg(2+)-binding residues include Asp-491 and Asp-497. The KH domain maps to 558-617 (PKIMTMTINPEKIRDVIGPQGRVINKIIEETGVKIDIEQDGRVFIASINHEANLRAKQII). An S1 motif domain is found at 627–695 (GQVYLGTVKR…DQGRVNLSRK (69 aa)).

This sequence belongs to the polyribonucleotide nucleotidyltransferase family. Requires Mg(2+) as cofactor.

The protein resides in the cytoplasm. It catalyses the reaction RNA(n+1) + phosphate = RNA(n) + a ribonucleoside 5'-diphosphate. In terms of biological role, involved in mRNA degradation. Catalyzes the phosphorolysis of single-stranded polyribonucleotides processively in the 3'- to 5'-direction. The polypeptide is Polyribonucleotide nucleotidyltransferase (Brevibacillus brevis (strain 47 / JCM 6285 / NBRC 100599)).